Consider the following 90-residue polypeptide: UPF0298 protein RBAM_014860 (90 aa).

Belongs to the UPF0298 family.

It is found in the cytoplasm. This Bacillus velezensis (strain DSM 23117 / BGSC 10A6 / LMG 26770 / FZB42) (Bacillus amyloliquefaciens subsp. plantarum) protein is UPF0298 protein RBAM_014860.